Consider the following 637-residue polypeptide: Anthranilate synthase, phenazine specific (637 aa).

An anthranilate synthase component I region spans residues 1–434 (MSQTAAHLME…QREQIQADFS (434 aa)). The region spanning 437–628 (QVLIVDAEDT…LRHALIHTPV (192 aa)) is the Glutamine amidotransferase type-1 domain. Residues cysteine 517, histidine 602, and glutamate 604 each act as for GATase activity in the active site.

It carries out the reaction chorismate + L-glutamine = anthranilate + pyruvate + L-glutamate + H(+). Its pathway is antibiotic biosynthesis; phenazine biosynthesis. Functionally, involved in the biosynthesis of the antibiotic, phenazine, a nitrogen-containing heterocyclic molecule having important roles in virulence, competition and biological control. This is Anthranilate synthase, phenazine specific (phzB) from Pseudomonas chlororaphis (Pseudomonas aureofaciens).